A 315-amino-acid polypeptide reads, in one-letter code: Methionyl-tRNA formyltransferase (315 aa).

113–116 (SILP) contributes to the (6S)-5,6,7,8-tetrahydrofolate binding site.

The protein belongs to the Fmt family.

It carries out the reaction L-methionyl-tRNA(fMet) + (6R)-10-formyltetrahydrofolate = N-formyl-L-methionyl-tRNA(fMet) + (6S)-5,6,7,8-tetrahydrofolate + H(+). Its function is as follows. Attaches a formyl group to the free amino group of methionyl-tRNA(fMet). The formyl group appears to play a dual role in the initiator identity of N-formylmethionyl-tRNA by promoting its recognition by IF2 and preventing the misappropriation of this tRNA by the elongation apparatus. The protein is Methionyl-tRNA formyltransferase of Vibrio parahaemolyticus serotype O3:K6 (strain RIMD 2210633).